The primary structure comprises 1059 residues: Cellulose synthase catalytic subunit A [UDP-forming] (1059 aa).

Disordered stretches follow at residues 1–159 (MDRN…RFDT) and 174–220 (MRQH…KHVA). Positions 15–36 (NNINSSGGSYNNSMNNSSNNIG) are enriched in low complexity. Polar residues-rich tracts occupy residues 40–57 (GNNQ…QSNL) and 142–154 (NSPS…TSGG). The span at 181 to 194 (QEQQQQQQQQQQQQ) shows a compositional bias: low complexity. Basic residues predominate over residues 204-219 (QKKKPSSMQLSKKKHV). The next 3 membrane-spanning stretches (helical) occupy residues 246–266 (FSHA…IFYF), 280–300 (ITFS…LGSA), and 306–323 (FTNP…QILA). Residues 328–628 (KHPTVMMYVC…FLGLLDADQQ (301 aa)) form a catalytic subdomain A region. The active site involves D370. Positions 624 and 626 each coordinate substrate. A catalytic subdomain B region spans residues 701–761 (QPLYDIGGIM…EQRKRWAQGA (61 aa)). D717 is a catalytic residue. Helical transmembrane passes span 790–810 (IYPF…IMSI) and 813–833 (VPIV…PVMV). Residues 933–953 (DNAQESSGKHKAEQSFRTSNK) form a disordered region. Basic and acidic residues predominate over residues 939–953 (SGKHKAEQSFRTSNK). Helical transmembrane passes span 963–983 (LFLP…SAVL), 993–1013 (WLLV…WSFI), and 1035–1055 (IVLF…KVCI).

The protein belongs to the glycosyltransferase 2 family. Mg(2+) is required as a cofactor.

Its subcellular location is the membrane. The enzyme catalyses [(1-&gt;4)-beta-D-glucosyl](n) + UDP-alpha-D-glucose = [(1-&gt;4)-beta-D-glucosyl](n+1) + UDP + H(+). The protein operates within glycan metabolism; amoeba cellulose biosynthesis. Catalytic subunit of cellulose synthase. It incorporates glucose from uridine 5'-diphosphate glucose (UDP-alpha-D-glucose) to cellulose (a (1-&gt;4)-beta-D-glucan), which is produced as an extracellular component for mechanical and chemical protection at the onset of the stalk formation, when the cells exhibit multicellular behavior during culmination. The chain is Cellulose synthase catalytic subunit A [UDP-forming] (dcsA) from Dictyostelium discoideum (Social amoeba).